Reading from the N-terminus, the 428-residue chain is Chaperone SurA (428 aa).

The first 13 residues, 1–13 (MLGALLLSGAVHA), serve as a signal peptide directing secretion. PpiC domains follow at residues 164–265 (SEEF…KLLE) and 276–375 (RDEV…EVLG).

Its subcellular location is the periplasm. It catalyses the reaction [protein]-peptidylproline (omega=180) = [protein]-peptidylproline (omega=0). Functionally, chaperone involved in the correct folding and assembly of outer membrane proteins. Recognizes specific patterns of aromatic residues and the orientation of their side chains, which are found more frequently in integral outer membrane proteins. May act in both early periplasmic and late outer membrane-associated steps of protein maturation. The protein is Chaperone SurA of Pseudomonas syringae pv. tomato (strain ATCC BAA-871 / DC3000).